We begin with the raw amino-acid sequence, 448 residues long: Ribonuclease J (448 aa).

Positions 81, 83, 85, 86, 151, and 173 each coordinate Zn(2+). 383-387 (HVSGH) contacts substrate. H409 is a Zn(2+) binding site.

Belongs to the metallo-beta-lactamase superfamily. RNA-metabolizing metallo-beta-lactamase-like family. Archaeal RNase J subfamily. Forms homodimers on heating to 60 degrees Celsius which may be the active form. Zn(2+) serves as cofactor.

The protein resides in the cytoplasm. Inhibited by imidazole. Functionally, a 5'-3' exoribonuclease with a strong reference for 5'-monophosphorylated RNA and no endoribonuclease activty. Also has robust 5'-'3 nuclease activity on single-stranded DNA (exodeoxyribonuclease, exoDNase). May be involved in RNA degradation. In Methanocaldococcus jannaschii (strain ATCC 43067 / DSM 2661 / JAL-1 / JCM 10045 / NBRC 100440) (Methanococcus jannaschii), this protein is Ribonuclease J.